A 2603-amino-acid chain; its full sequence is Ankyrin repeat domain-containing protein 17 (2603 aa).

Methionine 1 is modified (N-acetylmethionine). Composition is skewed to low complexity over residues methionine 1–glutamate 34 and serine 42–glycine 53. The segment at methionine 1–glutamate 143 is disordered. 2 positions are modified to phosphoserine: serine 19 and serine 50. Residues lysine 63 to threonine 79 are compositionally biased toward basic residues. The segment covering serine 84–asparagine 94 has biased composition (low complexity). Over residues serine 95–threonine 111 the composition is skewed to gly residues. A compositionally biased stretch (acidic residues) spans serine 116 to glutamate 131. A Phosphoserine modification is found at serine 156. ANK repeat units follow at residues serine 233 to glutamate 262, glutamate 266 to aspartate 295, glycine 300 to alanine 329, threonine 333 to aspartate 362, asparagine 366 to threonine 395, phenylalanine 400 to histidine 429, glutamate 433 to methionine 462, serine 466 to glutamate 495, glutamate 499 to alanine 528, threonine 533 to leucine 562, glycine 563 to alanine 592, threonine 596 to histidine 625, glycine 629 to arginine 658, asparagine 663 to histidine 692, and aspartate 696 to serine 725. Lysine 318 is covalently cross-linked (Glycyl lysine isopeptide (Lys-Gly) (interchain with G-Cter in SUMO2)). The residue at position 803 (serine 803) is a Phosphoserine. 10 ANK repeats span residues asparagine 1082–histidine 1111, lysine 1115–alanine 1144, threonine 1149–histidine 1178, serine 1182–serine 1211, leucine 1217–alanine 1246, asparagine 1251–histidine 1280, threonine 1284–alanine 1313, serine 1319–valine 1348, lysine 1352–alanine 1381, and arginine 1385–serine 1414. A coiled-coil region spans residues valine 1442–glutamate 1526. The residue at position 1457 (serine 1457) is a Phosphoserine. Disordered regions lie at residues alanine 1479–glutamate 1500 and glutamate 1517–glutamate 1717. Residues arginine 1481–lysine 1491 are compositionally biased toward basic residues. 3 stretches are compositionally biased toward low complexity: residues threonine 1531 to threonine 1550, glutamate 1602 to serine 1611, and serine 1620 to serine 1632. Phosphoserine occurs at positions 1635 and 1639. Composition is skewed to polar residues over residues valine 1642–glutamine 1652 and leucine 1675–glycine 1703. Phosphoserine occurs at positions 1696, 1700, and 1709. A KH domain is found at arginine 1725–isoleucine 1789. Arginine 1874 carries the asymmetric dimethylarginine modification. Disordered stretches follow at residues proline 1906–arginine 1995, threonine 2011–serine 2192, and valine 2273–valine 2332. 2 stretches are compositionally biased toward low complexity: residues serine 1950–arginine 1995 and threonine 2011–threonine 2028. Phosphoserine occurs at positions 2042, 2044, 2045, 2047, 2059, and 2067. A compositionally biased stretch (polar residues) spans alanine 2066–glutamate 2078. The segment covering serine 2095–serine 2106 has biased composition (low complexity). Polar residues-rich tracts occupy residues asparagine 2107–glutamine 2127 and valine 2273–serine 2303. Pro residues predominate over residues phenylalanine 2308 to serine 2318. A phosphoserine mark is found at serine 2373 and serine 2401. Residues cysteine 2381 to valine 2423 form a disordered region. The segment covering serine 2382 to serine 2411 has biased composition (low complexity).

Interacts (via N-terminus) with NOD2. Interacts with CDK2, MCM3, MCM5, MCM7, CDC6 and PCNA. Interacts with MAVS and IFIH1. Interacts (via the second ankyrin repeat cluster) with DDX58. As to quaternary structure, (Microbial infection) Interacts with enterovirus 71/EV71 capsid protein VP1. Phosphorylated by CDK2. As to expression, ubiquitously expressed.

It localises to the cytoplasm. The protein localises to the nucleus. Its function is as follows. Could play pivotal roles in cell cycle and DNA regulation. Involved in innate immune defense against viruse by positively regulating the viral dsRNA receptors DDX58 and IFIH1 signaling pathways. Involves in NOD2- and NOD1-mediated responses to bacteria suggesting a role in innate antibacterial immune pathways too. Target of enterovirus 71 which is the major etiological agent of HFMD (hand, foot and mouth disease). Could play a central role for the formation and/or maintenance of the blood vessels of the circulation system. This Homo sapiens (Human) protein is Ankyrin repeat domain-containing protein 17 (ANKRD17).